A 256-amino-acid chain; its full sequence is MAPFKQNAKNKGPIRGKQFNNKFQRGGLSHNAKRKRKWVPEDKVFDGSLKEGQGFAFKRKEKVKHEYNKLLRKERKRKQESKVQLQEEYPEHLKHLYLAERERLDEEEQEKKKKRCKGRAVEEDIEEDDDKLNKDLGSSSSEKNITNTSTDQTIAPASSNEPAQPESSHKTTFFQRKQNISSYQKTKQEYERIKEERARKREEILKDKAQREEALKKYKEKKIATYQLLKRKTKKGQPNLNLQMELLLQKIQAQRK.

Disordered regions lie at residues 1-35 and 72-190; these read MAPFKQNAKNKGPIRGKQFNNKFQRGGLSHNAKRK and RKER…KQEY. A compositionally biased stretch (basic and acidic residues) spans 89 to 104; sequence YPEHLKHLYLAERERL. Polar residues predominate over residues 136–185; the sequence is LGSSSSEKNITNTSTDQTIAPASSNEPAQPESSHKTTFFQRKQNISSYQK.

It belongs to the TAP26 family.

This Danio rerio (Zebrafish) protein is Thyroid transcription factor 1-associated protein 26 homolog (ccdc59).